A 65-amino-acid polypeptide reads, in one-letter code: Large ribosomal subunit protein bL33m (65 aa).

A mitochondrion-targeting transit peptide spans Met-1–Phe-8.

It belongs to the bacterial ribosomal protein bL33 family. Component of the mitochondrial ribosome large subunit (39S) which comprises a 16S rRNA and about 50 distinct proteins.

The protein localises to the mitochondrion. The polypeptide is Large ribosomal subunit protein bL33m (Mrpl33) (Mus musculus (Mouse)).